A 96-amino-acid polypeptide reads, in one-letter code: Putative pterin-4-alpha-carbinolamine dehydratase (96 aa).

The protein belongs to the pterin-4-alpha-carbinolamine dehydratase family.

The enzyme catalyses (4aS,6R)-4a-hydroxy-L-erythro-5,6,7,8-tetrahydrobiopterin = (6R)-L-erythro-6,7-dihydrobiopterin + H2O. The protein is Putative pterin-4-alpha-carbinolamine dehydratase of Prochlorococcus marinus (strain SARG / CCMP1375 / SS120).